The following is a 234-amino-acid chain: Alpha N-terminal protein methyltransferase 1 (234 aa).

S-adenosyl-L-methionine is bound by residues Gly71, Arg76, 93–95 (DVV), 120–121 (LQ), and Gln136.

It belongs to the methyltransferase superfamily. NTM1 family. As to expression, expressed in uterine cells and PVT neurons of the tail. Expressed in pharynx, intestine and DVB tail neuron.

The enzyme catalyses N-terminal L-alanyl-L-prolyl-L-lysyl-[protein] + 3 S-adenosyl-L-methionine = N-terminal N,N,N-trimethyl-L-alanyl-L-prolyl-L-lysyl-[protein] + 3 S-adenosyl-L-homocysteine + 3 H(+). It catalyses the reaction N-terminal L-seryl-L-prolyl-L-lysyl-[protein] + 3 S-adenosyl-L-methionine = N-terminal N,N,N-trimethyl-L-seryl-L-prolyl-L-lysyl-[protein] + 3 S-adenosyl-L-homocysteine + 3 H(+). It carries out the reaction N-terminal L-prolyl-L-prolyl-L-lysyl-[protein] + 2 S-adenosyl-L-methionine = N-terminal N,N-dimethyl-L-prolyl-L-prolyl-L-lysyl-[protein] + 2 S-adenosyl-L-homocysteine + 2 H(+). Alpha-N-methyltransferase that methylates the N-terminus of target proteins containing the N-terminal motif [Ala/Pro/Ser]-Pro-Lys when the initiator Met is cleaved. Specifically catalyzes mono-, di- or tri-methylation of exposed alpha-amino group of Ala or Ser residue in the [Ala/Ser]-Pro-Lys motif and mono- or di-methylation of Pro in the Pro-Pro-Lys motif. Probably required for the synthesis of neurotransmitter melatonin from serotonin, which plays a role in promoting a sleep-like state, called lethargus, during larval development. This is Alpha N-terminal protein methyltransferase 1 from Caenorhabditis elegans.